We begin with the raw amino-acid sequence, 128 residues long: Small ribosomal subunit protein uS12 (128 aa).

Asp-89 bears the 3-methylthioaspartic acid mark.

It belongs to the universal ribosomal protein uS12 family. As to quaternary structure, part of the 30S ribosomal subunit. Contacts proteins S8 and S17. May interact with IF1 in the 30S initiation complex.

Its function is as follows. With S4 and S5 plays an important role in translational accuracy. Functionally, interacts with and stabilizes bases of the 16S rRNA that are involved in tRNA selection in the A site and with the mRNA backbone. Located at the interface of the 30S and 50S subunits, it traverses the body of the 30S subunit contacting proteins on the other side and probably holding the rRNA structure together. The combined cluster of proteins S8, S12 and S17 appears to hold together the shoulder and platform of the 30S subunit. This Campylobacter jejuni subsp. jejuni serotype O:6 (strain 81116 / NCTC 11828) protein is Small ribosomal subunit protein uS12.